The sequence spans 488 residues: Prostaglandin E2 receptor EP4 subtype (488 aa).

Residues 1–19 (MSTPGVNSSASLSPDRLNS) are Extracellular-facing. Asn7 carries N-linked (GlcNAc...) asparagine glycosylation. The helical transmembrane segment at 20-43 (PVTIPAVMFIFGVVGNLVAIVVLC) threads the bilayer. Residues 44-55 (KSRKEQKETTFY) lie on the Cytoplasmic side of the membrane. The helical transmembrane segment at 56–79 (TLVCGLAVTDLLGTLLVSPVTIAT) threads the bilayer. Residues 80-96 (YMKGQWPGGQPLCEYST) are Extracellular-facing. An intrachain disulfide couples Cys92 to Cys170. The chain crosses the membrane as a helical span at residues 97–115 (FILLFFSLSGLSIICAMSV). Residues 116 to 135 (ERYLAINHAYFYSHYVDKRL) lie on the Cytoplasmic side of the membrane. Residues 136 to 160 (AGLTLFAVYASNVLFCALPNMGLGS) traverse the membrane as a helical segment. Residues 161–184 (SRLQYPDTWCFIDWTTNVTAHAAY) lie on the Extracellular side of the membrane. Residues 185–211 (SYMYAGFSSFLILATVLCNVLVCGALL) form a helical membrane-spanning segment. The Cytoplasmic portion of the chain corresponds to 212–267 (RMHRQFMRRTSLGTEQHHAAAAASVASRGHPAASPALPRLSDFRRRRSFRRIAGAE). The helical transmembrane segment at 268–295 (IQMVILLIATSLVVLICSIPLVVRVFVN) threads the bilayer. The Extracellular segment spans residues 296-312 (QLYQPSLEREVSKNPDL). The chain crosses the membrane as a helical span at residues 313–332 (QAIRIASVNPILDPWIYILL). Residues 333-488 (RKTVLSKAIE…ETLNLSEKCI (156 aa)) are Cytoplasmic-facing. A disordered region spans residues 356-376 (RERSGQHCSDSQRTSSAMSGH). Residues 361-376 (QHCSDSQRTSSAMSGH) show a composition bias toward polar residues. 4 positions are modified to phosphoserine: Ser374, Ser377, Ser379, and Ser382. The span at 437-449 (SETSDSSQGQDSE) shows a compositional bias: polar residues. The tract at residues 437-475 (SETSDSSQGQDSESVLLVDEAGGSGRAGPAPKGSSLQVT) is disordered.

Belongs to the G-protein coupled receptor 1 family. In terms of assembly, interacts with FEM1A. In terms of processing, phosphorylation mediates agonist-mediated desensitization by promoting cytoplasmic retention. High in intestine and in peripheral blood mononuclear cells; low in lung, kidney, thymus, uterus, vasculature and brain. Not found in liver, heart, retina oe skeletal muscle.

The protein localises to the cell membrane. In terms of biological role, receptor for prostaglandin E2 (PGE2). The activity of this receptor is mediated by G(s) proteins that stimulate adenylate cyclase. Has a relaxing effect on smooth muscle. May play an important role in regulating renal hemodynamics, intestinal epithelial transport, adrenal aldosterone secretion, and uterine function. This is Prostaglandin E2 receptor EP4 subtype (PTGER4) from Homo sapiens (Human).